Reading from the N-terminus, the 206-residue chain is FMN-dependent NADH:quinone oxidoreductase 1 (206 aa).

Residues S9, 15-17, and 139-142 contribute to the FMN site; these read SVS and SRGG.

Belongs to the azoreductase type 1 family. In terms of assembly, homodimer. FMN is required as a cofactor.

It carries out the reaction 2 a quinone + NADH + H(+) = 2 a 1,4-benzosemiquinone + NAD(+). It catalyses the reaction N,N-dimethyl-1,4-phenylenediamine + anthranilate + 2 NAD(+) = 2-(4-dimethylaminophenyl)diazenylbenzoate + 2 NADH + 2 H(+). Its function is as follows. Quinone reductase that provides resistance to thiol-specific stress caused by electrophilic quinones. Also exhibits azoreductase activity. Catalyzes the reductive cleavage of the azo bond in aromatic azo compounds to the corresponding amines. In Cupriavidus pinatubonensis (strain JMP 134 / LMG 1197) (Cupriavidus necator (strain JMP 134)), this protein is FMN-dependent NADH:quinone oxidoreductase 1.